The following is a 699-amino-acid chain: SPS-sensor serine protease component SSY5 (699 aa).

2 disordered regions span residues 1–113 (MVRF…LQGF) and 128–158 (PVKE…ENAR). Positions 1–381 (MVRFFGLNKK…YCVKDYIKKA (381 aa)) are excised as a propeptide. Positions 24–38 (NEQNAAETSSSNVSG) are enriched in polar residues. Residues 39-51 (NEERIDPNSHDTN) are compositionally biased toward basic and acidic residues. Positions 61–78 (STTFGSSIQSSSIFSRGR) are enriched in low complexity. A compositionally biased stretch (polar residues) spans 83 to 93 (TGASSSMATSE). Low complexity-rich tracts occupy residues 97 to 109 (HSSG…NSKN) and 144 to 154 (SSSTSSTLATS). Residues 459–699 (FAITCAHVVL…QWDIDPQLDG (241 aa)) are serine protease. Active-site charge relay system residues include His465, Asp545, and Ser640.

The protein belongs to the peptidase S64 family. As to quaternary structure, component of the plasma membrane SPS (SSY1-PTR3-SSY5) amino acid sensor complex. In terms of processing, the propeptide is autoproteolytically cleaved from the catalytic domain but remains associated, forming an inactive protease complex. This processing occurs even in the absence of signaling.

The protein resides in the cell membrane. In terms of biological role, protease component of the SPS-sensor system, which regulates the expression of several amino acid-metabolizing enzymes and amino acid- and peptide-permeases in response to extracellular amino acid levels by controlling the activity of two transcription factors, STP1 and STP2. Catalyzes the activation of these transcription factors, which are synthesized as latent cytoplasmic precursors, by proteolytic removal of an N-terminal inhibitory domain containing cytoplasmic retention motifs. SSY5 binds as an inactive protease complex to STP1. In response to extracellular amino acids and dependent on the other SPS-sensor components, the inhibitory propeptide is induced to dissociate, and thereby enables the catalytic domain to process STP1. This is SPS-sensor serine protease component SSY5 (SSY5) from Saccharomyces cerevisiae (strain ATCC 204508 / S288c) (Baker's yeast).